We begin with the raw amino-acid sequence, 630 residues long: 1-deoxy-D-xylulose-5-phosphate synthase (630 aa).

Thiamine diphosphate is bound by residues H87 and 128 to 130; that span reads GHS. D159 provides a ligand contact to Mg(2+). Thiamine diphosphate is bound by residues 160–161, N188, F295, and E377; that span reads GA. Position 188 (N188) interacts with Mg(2+).

This sequence belongs to the transketolase family. DXPS subfamily. In terms of assembly, homodimer. The cofactor is Mg(2+). It depends on thiamine diphosphate as a cofactor.

The enzyme catalyses D-glyceraldehyde 3-phosphate + pyruvate + H(+) = 1-deoxy-D-xylulose 5-phosphate + CO2. It participates in metabolic intermediate biosynthesis; 1-deoxy-D-xylulose 5-phosphate biosynthesis; 1-deoxy-D-xylulose 5-phosphate from D-glyceraldehyde 3-phosphate and pyruvate: step 1/1. Catalyzes the acyloin condensation reaction between C atoms 2 and 3 of pyruvate and glyceraldehyde 3-phosphate to yield 1-deoxy-D-xylulose-5-phosphate (DXP). In Pseudomonas savastanoi pv. phaseolicola (strain 1448A / Race 6) (Pseudomonas syringae pv. phaseolicola (strain 1448A / Race 6)), this protein is 1-deoxy-D-xylulose-5-phosphate synthase.